Here is a 140-residue protein sequence, read N- to C-terminus: Profilin-2 (140 aa).

An N-acetylalanine modification is found at Ala2.

The protein belongs to the profilin family. In terms of assembly, occurs in many kinds of cells as a complex with monomeric actin in a 1:1 ratio. Interacts with PFN2. Interacts with ACTMAP (via N-terminus); the interaction may facilitate efficient cleavage of the acetylated N-terminus of immature actin by ACTMAP.

It is found in the cytoplasm. The protein resides in the cytoskeleton. Binds to actin and affects the structure of the cytoskeleton. At high concentrations, profilin prevents the polymerization of actin, whereas it enhances it at low concentrations. By binding to PIP2, it inhibits the formation of IP3 and DG. This Rattus norvegicus (Rat) protein is Profilin-2 (Pfn2).